The following is a 136-amino-acid chain: ATP synthase epsilon chain (136 aa).

The protein belongs to the ATPase epsilon chain family. In terms of assembly, F-type ATPases have 2 components, CF(1) - the catalytic core - and CF(0) - the membrane proton channel. CF(1) has five subunits: alpha(3), beta(3), gamma(1), delta(1), epsilon(1). CF(0) has three main subunits: a, b and c.

It localises to the cell membrane. Its function is as follows. Produces ATP from ADP in the presence of a proton gradient across the membrane. The sequence is that of ATP synthase epsilon chain from Macrococcus caseolyticus (strain JCSC5402) (Macrococcoides caseolyticum).